The chain runs to 143 residues: Large ribosomal subunit protein uL11 (143 aa).

Belongs to the universal ribosomal protein uL11 family. In terms of assembly, part of the ribosomal stalk of the 50S ribosomal subunit. Interacts with L10 and the large rRNA to form the base of the stalk. L10 forms an elongated spine to which L12 dimers bind in a sequential fashion forming a multimeric L10(L12)X complex. In terms of processing, one or more lysine residues are methylated.

Its function is as follows. Forms part of the ribosomal stalk which helps the ribosome interact with GTP-bound translation factors. The polypeptide is Large ribosomal subunit protein uL11 (Polynucleobacter asymbioticus (strain DSM 18221 / CIP 109841 / QLW-P1DMWA-1) (Polynucleobacter necessarius subsp. asymbioticus)).